The sequence spans 225 residues: Translation initiation factor 6 (225 aa).

It belongs to the eIF-6 family.

In terms of biological role, binds to the 50S ribosomal subunit and prevents its association with the 30S ribosomal subunit to form the 70S initiation complex. This chain is Translation initiation factor 6, found in Hyperthermus butylicus (strain DSM 5456 / JCM 9403 / PLM1-5).